Reading from the N-terminus, the 333-residue chain is L-lactate dehydrogenase A chain (333 aa).

Ala2 bears the N-acetylalanine mark. Residues 30 to 58 and Arg100 each bind NAD(+); that span reads GAVG…MEDK. Residues Arg107, Asn139, and Arg170 each contribute to the substrate site. Asn139 serves as a coordination point for NAD(+). The active-site Proton acceptor is His194. Thr249 provides a ligand contact to substrate.

Belongs to the LDH/MDH superfamily. LDH family. In terms of assembly, homotetramer.

The protein resides in the cytoplasm. The catalysed reaction is (S)-lactate + NAD(+) = pyruvate + NADH + H(+). Its pathway is fermentation; pyruvate fermentation to lactate; (S)-lactate from pyruvate: step 1/1. Functionally, interconverts simultaneously and stereospecifically pyruvate and lactate with concomitant interconversion of NADH and NAD(+). This Squalus acanthias (Spiny dogfish) protein is L-lactate dehydrogenase A chain (ldha).